The chain runs to 659 residues: MKPVMPHAQLDWDDQGRPRSRVFDDVYFSDQSGLDETRYVFLEQNRLAERFAALSAGGRLVIGETGFGTGLNFLCAWQLFEQHAVAGARLHFVSVEKFPLSPADLQRALALWPDLKRFSDQLLKHYVAIHQGFQRIVLDNGRITLTLLIGDALEQLPQLDGQIDAWFLDGFAPAKNPEMWTAELFAELARLAAPGSTISTFTSTGWVRRLLNAAGFKMKRTPGIGHKWEILRGEFLGWPEGVAPPAAAKPWFARPTRLTGDRRALVIGAGLAGCATAASLAARGWQVSLLERHDAVAQEASGNPQGVLYLKLSAHGTALSQLIVSGFGYTRRVLETLQRGTDWDDCGVLQLAFNEKERERQAQLASAFPEDLLQWLDQPEAQARAGVGLAHGGLYYPEGGWVHPPALCQAQSAQPGVTLLPHQEAVELRKVGDQWQAFDGERLIATAPVVVLAGAAEIKRFAQSGELPLKRIRGQITRLAQTAQSQALATVVCAEGYVAPARWGEHTLGASFDFSSDDLTPTTAEHLGNLAMLEEISTDLVARLHVSERDAESLQGRAAFRCTSPDYLPMVGPLADREAFTRIYAALSKDARQVPDMPCPWLDGLYVNSGHGSRGLITAPLSGELLAAWLDNEPLPLPRSVAEACHPNRFALRRLIRGK.

The tRNA (mnm(5)s(2)U34)-methyltransferase stretch occupies residues 1 to 236 (MKPVMPHAQL…KWEILRGEFL (236 aa)). The segment at 267-659 (IGAGLAGCAT…FALRRLIRGK (393 aa)) is FAD-dependent cmnm(5)s(2)U34 oxidoreductase.

The protein in the N-terminal section; belongs to the methyltransferase superfamily. tRNA (mnm(5)s(2)U34)-methyltransferase family. In the C-terminal section; belongs to the DAO family. Requires FAD as cofactor.

It is found in the cytoplasm. It carries out the reaction 5-aminomethyl-2-thiouridine(34) in tRNA + S-adenosyl-L-methionine = 5-methylaminomethyl-2-thiouridine(34) in tRNA + S-adenosyl-L-homocysteine + H(+). Functionally, catalyzes the last two steps in the biosynthesis of 5-methylaminomethyl-2-thiouridine (mnm(5)s(2)U) at the wobble position (U34) in tRNA. Catalyzes the FAD-dependent demodification of cmnm(5)s(2)U34 to nm(5)s(2)U34, followed by the transfer of a methyl group from S-adenosyl-L-methionine to nm(5)s(2)U34, to form mnm(5)s(2)U34. This chain is tRNA 5-methylaminomethyl-2-thiouridine biosynthesis bifunctional protein MnmC, found in Pseudomonas fluorescens (strain Pf0-1).